The primary structure comprises 166 residues: PR-toxin biosynthesis cluster protein 10 (166 aa).

Part of the gene cluster that mediates the biosynthesis of PR-toxin, a bicyclic sesquiterpene belonging to the eremophilane class and acting as a mycotoxin. The first step of the pathway is catalyzed by the aristolochene synthase which performs the cyclization of trans,trans-farnesyl diphosphate (FPP) to the bicyclic sesquiterpene aristolochene. Following the formation of aristolochene, the non-oxygenated aristolochene is converted to the trioxygenated intermediate eremofortin B, via 7-epi-neopetasone. This conversion appears to involve three enzymes, a hydroxysterol oxidase-like enzyme, the quinone-oxidase prx3 that forms the quinone-type-structure in the bicyclic nucleus of aristolochene with the C8-oxo group and the C-3 hydroxyl group, and the P450 monooxygenase prx9 that introduces the epoxide at the double bond between carbons 1 and 2. No monoxy or dioxy-intermediates have been reported to be released to the broth, so these three early oxidative reactions may be coupled together. Eremofortin B is further oxidized by another P450 monooxygenase, that introduces a second epoxide between carbons 7 and 11 prior to acetylation to eremofortin A by the acetyltransferase prx11. The second epoxidation may be performed by a second P450 monooxygenase. After the acetylation step, eremofortin A is converted to eremofortin C and then to PR-toxin. First the conversion of eremofortin A to eremofortin C proceeds by oxidation of the side chain of the molecule at C-12 and is catalyzed by the short-chain oxidoreductase prx1. The cytochrome P450 monooxygenase prx8 also plays a role in this step. The primary alcohol formed at C-12 is finally oxidized by the short-chain alcohol dehydrogenase prx4 that forms PR-toxin. The polypeptide is PR-toxin biosynthesis cluster protein 10 (Penicillium rubens (strain ATCC 28089 / DSM 1075 / NRRL 1951 / Wisconsin 54-1255) (Penicillium chrysogenum)).